A 402-amino-acid polypeptide reads, in one-letter code: Multidrug resistance protein MdtH (402 aa).

10 consecutive transmembrane segments (helical) span residues 13–33 (YFLL…FPLI), 34–54 (SIRF…ALGL), 99–116 (PWIL…GTLF), 139–159 (LLMM…SWLL), 165–185 (YVCW…AWLL), 214–234 (VLTL…LPIM), 244–264 (AVKW…YPIA), 277–297 (LMFG…STTL), 340–360 (LGLA…YDMG), and 368–388 (LPWA…YWQF).

It belongs to the major facilitator superfamily. DHA1 family. MdtH (TC 2.A.1.2.21) subfamily.

It is found in the cell inner membrane. This chain is Multidrug resistance protein MdtH, found in Edwardsiella ictaluri (strain 93-146).